A 404-amino-acid polypeptide reads, in one-letter code: 8-amino-7-oxononanoate synthase (404 aa).

Arg20 provides a ligand contact to substrate. Residue 116 to 117 (GY) participates in pyridoxal 5'-phosphate binding. His141 contacts substrate. Pyridoxal 5'-phosphate is bound by residues Ser187, His215, and Thr243. N6-(pyridoxal phosphate)lysine is present on Lys246. Residue Thr366 coordinates substrate.

The protein belongs to the class-II pyridoxal-phosphate-dependent aminotransferase family. BioF subfamily. As to quaternary structure, homodimer. It depends on pyridoxal 5'-phosphate as a cofactor.

The catalysed reaction is 6-carboxyhexanoyl-[ACP] + L-alanine + H(+) = (8S)-8-amino-7-oxononanoate + holo-[ACP] + CO2. It participates in cofactor biosynthesis; biotin biosynthesis. Catalyzes the decarboxylative condensation of pimeloyl-[acyl-carrier protein] and L-alanine to produce 8-amino-7-oxononanoate (AON), [acyl-carrier protein], and carbon dioxide. The polypeptide is 8-amino-7-oxononanoate synthase (Cupriavidus necator (strain ATCC 17699 / DSM 428 / KCTC 22496 / NCIMB 10442 / H16 / Stanier 337) (Ralstonia eutropha)).